Reading from the N-terminus, the 375-residue chain is Ribosomal RNA large subunit methyltransferase G (375 aa).

This sequence belongs to the methyltransferase superfamily. RlmG family.

Its subcellular location is the cytoplasm. It carries out the reaction guanosine(1835) in 23S rRNA + S-adenosyl-L-methionine = N(2)-methylguanosine(1835) in 23S rRNA + S-adenosyl-L-homocysteine + H(+). Functionally, specifically methylates the guanine in position 1835 (m2G1835) of 23S rRNA. The chain is Ribosomal RNA large subunit methyltransferase G from Erwinia tasmaniensis (strain DSM 17950 / CFBP 7177 / CIP 109463 / NCPPB 4357 / Et1/99).